Consider the following 163-residue polypeptide: 6,7-dimethyl-8-ribityllumazine synthase 1 (163 aa).

5-amino-6-(D-ribitylamino)uracil is bound by residues Phe27, 58–60, and 87–89; these read ALE and CVV. Residue 92 to 93 participates in (2S)-2-hydroxy-3-oxobutyl phosphate binding; that stretch reads ET. Catalysis depends on His95, which acts as the Proton donor. Asn120 contacts 5-amino-6-(D-ribitylamino)uracil. Arg134 serves as a coordination point for (2S)-2-hydroxy-3-oxobutyl phosphate.

It belongs to the DMRL synthase family.

The enzyme catalyses (2S)-2-hydroxy-3-oxobutyl phosphate + 5-amino-6-(D-ribitylamino)uracil = 6,7-dimethyl-8-(1-D-ribityl)lumazine + phosphate + 2 H2O + H(+). Its pathway is cofactor biosynthesis; riboflavin biosynthesis; riboflavin from 2-hydroxy-3-oxobutyl phosphate and 5-amino-6-(D-ribitylamino)uracil: step 1/2. Its function is as follows. Catalyzes the formation of 6,7-dimethyl-8-ribityllumazine by condensation of 5-amino-6-(D-ribitylamino)uracil with 3,4-dihydroxy-2-butanone 4-phosphate. This is the penultimate step in the biosynthesis of riboflavin. This Rhodopseudomonas palustris (strain ATCC BAA-98 / CGA009) protein is 6,7-dimethyl-8-ribityllumazine synthase 1.